We begin with the raw amino-acid sequence, 362 residues long: Peptide chain release factor 1 (362 aa).

An N5-methylglutamine modification is found at Gln232.

It belongs to the prokaryotic/mitochondrial release factor family. Post-translationally, methylated by PrmC. Methylation increases the termination efficiency of RF1.

It localises to the cytoplasm. Functionally, peptide chain release factor 1 directs the termination of translation in response to the peptide chain termination codons UAG and UAA. This is Peptide chain release factor 1 from Myxococcus xanthus.